The sequence spans 290 residues: Small ribosomal subunit protein uS2 (290 aa).

The interval 269 to 290 is disordered; the sequence is WEAEASGDWAAESAQPNPETKW.

It belongs to the universal ribosomal protein uS2 family. In terms of assembly, component of the small ribosomal subunit. Mature ribosomes consist of a small (40S) and a large (60S) subunit. The 40S subunit contains about 33 different proteins and 1 molecule of RNA (18S). The 60S subunit contains about 49 different proteins and 3 molecules of RNA (25S, 5.8S and 5S). Interacts with rps21.

It localises to the cytoplasm. Required for the assembly and/or stability of the 40S ribosomal subunit. Required for the processing of the 20S rRNA-precursor to mature 18S rRNA in a late step of the maturation of 40S ribosomal subunits. The polypeptide is Small ribosomal subunit protein uS2 (rps0) (Talaromyces marneffei (strain ATCC 18224 / CBS 334.59 / QM 7333) (Penicillium marneffei)).